The chain runs to 632 residues: Probable potassium transport system protein Kup 1 (632 aa).

Helical transmembrane passes span 17–37, 60–80, 106–126, 144–164, 175–195, 210–230, 254–274, 292–312, 344–364, 370–390, 401–421, and 426–446; these read LFYL…TSPL, LISL…VLFL, TALL…DAMI, PSLA…LFVV, FFGP…ISHI, AVSF…AVFL, WFLL…ALVL, ALLP…QAVI, IFLP…VLSF, LATA…IMAF, LPVA…FLGA, and IHDG…VMWT.

This sequence belongs to the HAK/KUP transporter (TC 2.A.72) family.

Its subcellular location is the cell inner membrane. The enzyme catalyses K(+)(in) + H(+)(in) = K(+)(out) + H(+)(out). Transport of potassium into the cell. Likely operates as a K(+):H(+) symporter. This is Probable potassium transport system protein Kup 1 from Rhizobium etli (strain ATCC 51251 / DSM 11541 / JCM 21823 / NBRC 15573 / CFN 42).